We begin with the raw amino-acid sequence, 118 residues long: Large ribosomal subunit protein uL24 (118 aa).

Belongs to the universal ribosomal protein uL24 family. Part of the 50S ribosomal subunit.

In terms of biological role, one of two assembly initiator proteins, it binds directly to the 5'-end of the 23S rRNA, where it nucleates assembly of the 50S subunit. One of the proteins that surrounds the polypeptide exit tunnel on the outside of the subunit. The chain is Large ribosomal subunit protein uL24 from Prochlorococcus marinus (strain MIT 9515).